A 407-amino-acid polypeptide reads, in one-letter code: 1-deoxy-D-xylulose 5-phosphate reductoisomerase (407 aa).

Residues T27, G28, S29, I30, A53, R54, N55, and N140 each contribute to the NADPH site. Residue K141 participates in 1-deoxy-D-xylulose 5-phosphate binding. E142 is a binding site for NADPH. Mn(2+) is bound at residue D166. 1-deoxy-D-xylulose 5-phosphate is bound by residues S167, E168, S192, and H215. E168 serves as a coordination point for Mn(2+). G221 lines the NADPH pocket. 1-deoxy-D-xylulose 5-phosphate is bound by residues S228, N233, K234, and E237. E237 is a Mn(2+) binding site.

This sequence belongs to the DXR family. Mg(2+) is required as a cofactor. Requires Mn(2+) as cofactor.

The enzyme catalyses 2-C-methyl-D-erythritol 4-phosphate + NADP(+) = 1-deoxy-D-xylulose 5-phosphate + NADPH + H(+). It functions in the pathway isoprenoid biosynthesis; isopentenyl diphosphate biosynthesis via DXP pathway; isopentenyl diphosphate from 1-deoxy-D-xylulose 5-phosphate: step 1/6. In terms of biological role, catalyzes the NADPH-dependent rearrangement and reduction of 1-deoxy-D-xylulose-5-phosphate (DXP) to 2-C-methyl-D-erythritol 4-phosphate (MEP). The polypeptide is 1-deoxy-D-xylulose 5-phosphate reductoisomerase (Oleidesulfovibrio alaskensis (strain ATCC BAA-1058 / DSM 17464 / G20) (Desulfovibrio alaskensis)).